The sequence spans 249 residues: tRNA (guanine-N(1)-)-methyltransferase (249 aa).

S-adenosyl-L-methionine contacts are provided by residues glycine 113 and isoleucine 133 to valine 138.

The protein belongs to the RNA methyltransferase TrmD family. As to quaternary structure, homodimer.

It is found in the cytoplasm. The catalysed reaction is guanosine(37) in tRNA + S-adenosyl-L-methionine = N(1)-methylguanosine(37) in tRNA + S-adenosyl-L-homocysteine + H(+). In terms of biological role, specifically methylates guanosine-37 in various tRNAs. This chain is tRNA (guanine-N(1)-)-methyltransferase, found in Neisseria meningitidis serogroup C (strain 053442).